The following is an 813-amino-acid chain: Cadherin-22 (813 aa).

Residues Met1 to Ala33 form the signal peptide. Over Ala34–Pro621 the chain is Extracellular. 5 Cadherin domains span residues Trp61–Phe165, Leu166–Phe274, Pro275–Phe391, Arg392–Glu495, and Leu496–Phe613. Asn159 is a glycosylation site (N-linked (GlcNAc...) asparagine). Asn463 and Asn609 each carry an N-linked (GlcNAc...) asparagine glycan. Residues Gly622–Leu642 traverse the membrane as a helical segment. Topologically, residues Thr643–Ser813 are cytoplasmic. The disordered stretch occupies residues Gly696–Glu726.

Strongly expressed in the pituitary gland and the brain (in the inner granular and glomerular layers of the olfactory bulb, anterior olfactory nucleus, primary olfactory cortex, Purkinje cell layer of cerebellum, and pineal gland). Low expression in lung and heart. No expression in submandibular gland, thymus, liver, spleen, adrenal, and kidney.

The protein resides in the cell membrane. Its function is as follows. Cadherins are calcium-dependent cell adhesion proteins. They preferentially interact with themselves in a homophilic manner in connecting cells; cadherins may thus contribute to the sorting of heterogeneous cell types. PB-cadherins may have a role in the morphological organization of pituitary gland and brain tissues. The sequence is that of Cadherin-22 (Cdh22) from Rattus norvegicus (Rat).